The primary structure comprises 252 residues: Aspartate/glutamate leucyltransferase (252 aa).

This sequence belongs to the R-transferase family. Bpt subfamily.

The protein resides in the cytoplasm. It carries out the reaction N-terminal L-glutamyl-[protein] + L-leucyl-tRNA(Leu) = N-terminal L-leucyl-L-glutamyl-[protein] + tRNA(Leu) + H(+). The catalysed reaction is N-terminal L-aspartyl-[protein] + L-leucyl-tRNA(Leu) = N-terminal L-leucyl-L-aspartyl-[protein] + tRNA(Leu) + H(+). Functionally, functions in the N-end rule pathway of protein degradation where it conjugates Leu from its aminoacyl-tRNA to the N-termini of proteins containing an N-terminal aspartate or glutamate. This chain is Aspartate/glutamate leucyltransferase, found in Agrobacterium fabrum (strain C58 / ATCC 33970) (Agrobacterium tumefaciens (strain C58)).